Here is a 163-residue protein sequence, read N- to C-terminus: Protein GOLVEN 3 (163 aa).

Residues 1-20 (MMRFTIIVIAFLLIIQSLEE) form the signal peptide. Residues 21–141 (EHILVYAHEG…MEKLARLLRD (121 aa)) constitute a propeptide that is removed on maturation. Tyrosine 143 carries the sulfotyrosine modification. The disordered stretch occupies residues 144 to 163 (PIYSKPRRKPPVNNRAPDKF). Residue proline 154 is modified to Hydroxyproline. The propeptide occupies 158–163 (RAPDKF).

This sequence belongs to the RGF family. Binds to LRR receptor-like serine/threonine-protein kinases RGI1, RGI2 and RGI3 to trigger their dimerization with SERK proteins and subsequent signaling. Expressed in roots, specifically in the root apical meristem (RAM).

The protein resides in the secreted. Functionally, signaling peptide (root growth factor) required during root gravitropism in a PIN2-traffic dependent manner, thus influencing the formation of auxin gradients. Maintains the postembryonic root stem cell niche. The sequence is that of Protein GOLVEN 3 from Arabidopsis thaliana (Mouse-ear cress).